A 423-amino-acid polypeptide reads, in one-letter code: NDP-N-acetyl-D-galactosaminuronic acid dehydrogenase (423 aa).

11–28 (TISVVGLGYIGLPTATVL) is a binding site for NAD(+). The active-site Proton donor/acceptor is the lysine 218. Residue cysteine 272 is the Nucleophile of the active site.

This sequence belongs to the UDP-glucose/GDP-mannose dehydrogenase family.

Functionally, probably involved in the synthesis of sugar components of EPS I, by converting NDP-N-acetyl-D-galactosamine into NDP-N-acetyl-D-galactosaminuronic acid. This Ralstonia nicotianae (strain ATCC BAA-1114 / GMI1000) (Ralstonia solanacearum) protein is NDP-N-acetyl-D-galactosaminuronic acid dehydrogenase (epsD).